We begin with the raw amino-acid sequence, 56 residues long: uncharacterized protein (56 aa).

A helical transmembrane segment spans residues 2–22; it reads ILYIIVAISILLNIILGIKVI.

It is found in the membrane. This is an uncharacterized protein from Methanocaldococcus jannaschii (strain ATCC 43067 / DSM 2661 / JAL-1 / JCM 10045 / NBRC 100440) (Methanococcus jannaschii).